Here is a 257-residue protein sequence, read N- to C-terminus: BTB/POZ domain-containing protein kctd15-like (257 aa).

A phosphoserine mark is found at serine 9 and serine 12. In terms of domain architecture, BTB spans 30–100; that stretch reads APVHIDVGGH…LRTSKLLLPE (71 aa).

This Danio rerio (Zebrafish) protein is BTB/POZ domain-containing protein kctd15-like (kctd15l).